The chain runs to 149 residues: 3-dehydroquinate dehydratase (149 aa).

Tyrosine 26 functions as the Proton acceptor in the catalytic mechanism. Asparagine 77, histidine 83, and aspartate 90 together coordinate substrate. The active-site Proton donor is histidine 103. Residues leucine 104–serine 105 and arginine 114 each bind substrate.

It belongs to the type-II 3-dehydroquinase family. As to quaternary structure, homododecamer.

It carries out the reaction 3-dehydroquinate = 3-dehydroshikimate + H2O. Its pathway is metabolic intermediate biosynthesis; chorismate biosynthesis; chorismate from D-erythrose 4-phosphate and phosphoenolpyruvate: step 3/7. Functionally, catalyzes a trans-dehydration via an enolate intermediate. The chain is 3-dehydroquinate dehydratase from Haemophilus influenzae (strain PittGG).